Consider the following 244-residue polypeptide: Orotidine 5'-phosphate decarboxylase (244 aa).

Substrate-binding positions include Asp-20, Lys-42, 70-79, Thr-125, Arg-186, Gln-195, Gly-215, and Arg-216; that span reads DLKFFDIPAT. The active-site Proton donor is the Lys-72.

This sequence belongs to the OMP decarboxylase family. Type 1 subfamily. In terms of assembly, homodimer.

The catalysed reaction is orotidine 5'-phosphate + H(+) = UMP + CO2. It functions in the pathway pyrimidine metabolism; UMP biosynthesis via de novo pathway; UMP from orotate: step 2/2. In terms of biological role, catalyzes the decarboxylation of orotidine 5'-monophosphate (OMP) to uridine 5'-monophosphate (UMP). The polypeptide is Orotidine 5'-phosphate decarboxylase (Xylella fastidiosa (strain M12)).